A 273-amino-acid chain; its full sequence is Dermonecrotic toxin LspaSicTox-alphaIA1ii (273 aa).

Histidine 5 is a catalytic residue. Residues glutamate 25 and aspartate 27 each coordinate Mg(2+). The Nucleophile role is filled by histidine 41. 2 disulfide bridges follow: cysteine 45/cysteine 51 and cysteine 47/cysteine 190. Aspartate 85 serves as a coordination point for Mg(2+).

The protein belongs to the arthropod phospholipase D family. Class II subfamily. Requires Mg(2+) as cofactor. In terms of tissue distribution, expressed by the venom gland.

It localises to the secreted. The enzyme catalyses an N-(acyl)-sphingosylphosphocholine = an N-(acyl)-sphingosyl-1,3-cyclic phosphate + choline. It catalyses the reaction an N-(acyl)-sphingosylphosphoethanolamine = an N-(acyl)-sphingosyl-1,3-cyclic phosphate + ethanolamine. The catalysed reaction is a 1-acyl-sn-glycero-3-phosphocholine = a 1-acyl-sn-glycero-2,3-cyclic phosphate + choline. It carries out the reaction a 1-acyl-sn-glycero-3-phosphoethanolamine = a 1-acyl-sn-glycero-2,3-cyclic phosphate + ethanolamine. In terms of biological role, dermonecrotic toxins cleave the phosphodiester linkage between the phosphate and headgroup of certain phospholipids (sphingolipid and lysolipid substrates), forming an alcohol (often choline) and a cyclic phosphate. This toxin acts on sphingomyelin (SM). It may also act on ceramide phosphoethanolamine (CPE), lysophosphatidylcholine (LPC) and lysophosphatidylethanolamine (LPE), but not on lysophosphatidylserine (LPS), and lysophosphatidylglycerol (LPG). It acts by transphosphatidylation, releasing exclusively cyclic phosphate products as second products. Induces dermonecrosis, hemolysis, increased vascular permeability, edema, inflammatory response, and platelet aggregation. The polypeptide is Dermonecrotic toxin LspaSicTox-alphaIA1ii (Loxosceles spadicea (Recluse spider)).